The following is a 414-amino-acid chain: 2-epi-5-epi-valiolone synthase (414 aa).

NAD(+) is bound by residues Asp70, 101–104, 134–138, 158–159, Lys171, Lys180, and 198–201; these read ESAK, GVLTD, TT, and FLAT. Lys171 is an active-site residue. 3 residues coordinate Zn(2+): Glu213, His284, and His300.

Belongs to the sugar phosphate cyclases superfamily. EEVS family. NAD(+) serves as cofactor. It depends on Zn(2+) as a cofactor.

It catalyses the reaction D-sedoheptulose 7-phosphate = 2-epi-5-epi-valiolone + phosphate. The protein operates within antibiotic biosynthesis. Catalyzes the cyclization of D-sedoheptulose 7-phosphate to 2-epi-5-epi-valiolone. Involved in validamycin biosynthesis. In Streptomyces hygroscopicus subsp. jinggangensis (strain 5008), this protein is 2-epi-5-epi-valiolone synthase.